A 339-amino-acid polypeptide reads, in one-letter code: RNA polymerase principal sigma factor HrdC (339 aa).

The span at 1–10 shows a compositional bias: low complexity; the sequence is MAPTARTPTA. Disordered regions lie at residues 1 to 37 and 71 to 101; these read MAPT…EEPD and REEL…DGQE. Positions 91-101 are enriched in basic and acidic residues; it reads TLEETVHDGQE. A Polymerase core binding motif is present at residues 130 to 143; sequence DVIQEGNLGLIRAV. Residues 300–319 constitute a DNA-binding region (H-T-H motif); sequence LQQVAQHVGLTRERVRQLEK.

Belongs to the sigma-70 factor family. In terms of assembly, interacts transiently with the RNA polymerase catalytic core.

Sigma factors are initiation factors that promote the attachment of RNA polymerase to specific initiation sites and are then released. The polypeptide is RNA polymerase principal sigma factor HrdC (hrdC) (Streptomyces coelicolor (strain ATCC BAA-471 / A3(2) / M145)).